The primary structure comprises 394 residues: Tryptophan synthase beta chain (394 aa).

An N6-(pyridoxal phosphate)lysine modification is found at Lys90.

Belongs to the TrpB family. Tetramer of two alpha and two beta chains. Pyridoxal 5'-phosphate serves as cofactor.

The catalysed reaction is (1S,2R)-1-C-(indol-3-yl)glycerol 3-phosphate + L-serine = D-glyceraldehyde 3-phosphate + L-tryptophan + H2O. Its pathway is amino-acid biosynthesis; L-tryptophan biosynthesis; L-tryptophan from chorismate: step 5/5. The beta subunit is responsible for the synthesis of L-tryptophan from indole and L-serine. This Parabacteroides distasonis (strain ATCC 8503 / DSM 20701 / CIP 104284 / JCM 5825 / NCTC 11152) protein is Tryptophan synthase beta chain.